A 248-amino-acid chain; its full sequence is Isoprenyl transferase (248 aa).

Aspartate 23 is an active-site residue. Aspartate 23 is a Mg(2+) binding site. Substrate-binding positions include 24-27, tryptophan 28, arginine 36, histidine 40, and 68-70; these read GNGR and STE. The active-site Proton acceptor is asparagine 71. Residues tryptophan 72, arginine 74, arginine 185, and 191–193 each bind substrate; that span reads RIS. Glutamate 204 provides a ligand contact to Mg(2+).

It belongs to the UPP synthase family. In terms of assembly, homodimer. Mg(2+) serves as cofactor.

In terms of biological role, catalyzes the condensation of isopentenyl diphosphate (IPP) with allylic pyrophosphates generating different type of terpenoids. This chain is Isoprenyl transferase, found in Neisseria meningitidis serogroup B (strain ATCC BAA-335 / MC58).